The sequence spans 401 residues: Multidrug resistance protein MdtH (401 aa).

Residues 1–12 (MSRVSQARNLGK) are Cytoplasmic-facing. Residues 13–33 (YFLLIDNMLVVLGFFVVFPLV) traverse the membrane as a helical segment. Residues 34–98 (SIRFVDQMGW…GFATMGIAHE (65 aa)) are Periplasmic-facing. Residues 99–116 (PWLLWFSCLLSGLGGTLF) form a helical membrane-spanning segment. Over 117–137 (DPPRSALVVKLMPQQRGRFFS) the chain is Cytoplasmic. The chain crosses the membrane as a helical span at residues 138–158 (LLMMQDSAGAVIGALLGSWLL). Residues 159–163 (QYDFR) lie on the Periplasmic side of the membrane. The chain crosses the membrane as a helical span at residues 164–184 (LVCATGAVLFVLCAAFNAWLL). Residues 185-212 (PAWKLSTIRTPVREGMTRVMRDKRFVTY) lie on the Cytoplasmic side of the membrane. The helical transmembrane segment at 213 to 233 (VLTLAGYYMLAVQVMLMLPIM) threads the bilayer. The Periplasmic portion of the chain corresponds to 234 to 242 (VNDVAGAPS). Residues 243-263 (AVKWMYAIEACLSLTLLYPIA) traverse the membrane as a helical segment. Topologically, residues 264–275 (RWSEKHFRLEHR) are cytoplasmic. A helical transmembrane segment spans residues 276–296 (LMAGLLIMSLSMMPVGMVSGL). Over 297-298 (QQ) the chain is Periplasmic. Residues 299–319 (LFTLICLFYIGSIIAEPARET) traverse the membrane as a helical segment. Over 320–338 (LSASLADARARGSYMGFSR) the chain is Cytoplasmic. Residues 339 to 359 (LGLAIGGTIGYIGGGWLFDLG) form a helical membrane-spanning segment. Residues 360 to 366 (KSAHQPE) are Periplasmic-facing. A helical membrane pass occupies residues 367 to 387 (LPWMMLGIIGIFTFLALGWQF). Residues 388–401 (SQKRAARRLLERDA) lie on the Cytoplasmic side of the membrane.

It belongs to the major facilitator superfamily. DHA1 family. MdtH (TC 2.A.1.2.21) subfamily.

Its subcellular location is the cell inner membrane. This chain is Multidrug resistance protein MdtH, found in Shigella dysenteriae serotype 1 (strain Sd197).